A 61-amino-acid polypeptide reads, in one-letter code: Large ribosomal subunit protein bL28 (61 aa).

It belongs to the bacterial ribosomal protein bL28 family.

The polypeptide is Large ribosomal subunit protein bL28 (Geobacillus thermodenitrificans (strain NG80-2)).